Reading from the N-terminus, the 273-residue chain is NAD kinase (273 aa).

Asp-53 serves as the catalytic Proton acceptor. NAD(+) contacts are provided by residues 53-54 (DG), Arg-58, 128-129 (NE), Asp-157, 168-173 (TAYNFS), and Ala-192.

This sequence belongs to the NAD kinase family. The cofactor is a divalent metal cation.

It localises to the cytoplasm. The enzyme catalyses NAD(+) + ATP = ADP + NADP(+) + H(+). Its function is as follows. Involved in the regulation of the intracellular balance of NAD and NADP, and is a key enzyme in the biosynthesis of NADP. Catalyzes specifically the phosphorylation on 2'-hydroxyl of the adenosine moiety of NAD to yield NADP. The protein is NAD kinase of Finegoldia magna (strain ATCC 29328 / DSM 20472 / WAL 2508) (Peptostreptococcus magnus).